The sequence spans 121 residues: Basic phospholipase A2 BmjeTX-I (121 aa).

7 disulfides stabilise this stretch: Cys-26/Cys-114, Cys-28/Cys-45, Cys-44/Cys-95, Cys-50/Cys-121, Cys-51/Cys-88, Cys-58/Cys-82, and Cys-76/Cys-86. 3 residues coordinate Ca(2+): Tyr-27, Gly-29, and Gly-31. Residue His-48 is part of the active site. Asp-49 contacts Ca(2+). Asp-89 is an active-site residue.

Ca(2+) serves as cofactor. In terms of tissue distribution, expressed by the venom gland.

The protein resides in the secreted. The enzyme catalyses a 1,2-diacyl-sn-glycero-3-phosphocholine + H2O = a 1-acyl-sn-glycero-3-phosphocholine + a fatty acid + H(+). Functionally, snake venom phospholipase A2 (PLA2) that induces a slight blockade of neuromuscular contraction in an indirectly stimulated chick biventer cervicis nerve-muscle preparation. Does not inhibit contraction of chick biventer cervicic nerve-muscle preparation in response to treatment with acetylcholine or KCl. The neuromuscular blockade is mediated by inhibitory action at the presynaptic motor nerve endings. Lyses skeletal myoblasts and myotubes in vitro, and intramuscular injection causes local muscle necrosis. Induces edema in the mouse foot pad. Induces a transient increase of IL-6 levels. PLA2 catalyzes the calcium-dependent hydrolysis of the 2-acyl groups in 3-sn-phosphoglycerides. This chain is Basic phospholipase A2 BmjeTX-I, found in Bothrops marajoensis (Marajo lancehead).